The chain runs to 635 residues: Isethionate TRAP transporter permease protein DctMQ (635 aa).

The next 16 helical transmembrane spans lie at 38–58 (KPFL…QTLY), 75–95 (TEEM…PVAI), 117–137 (ISWI…LWQS), 154–174 (LQLP…LMAV), 192–212 (TVIG…ADYI), 217–237 (VLFG…IGLG), 266–286 (FPIM…AGGL), 299–319 (GALP…FAAI), 350–370 (AIVA…PFVV), 379–399 (IGKL…ALMA), 431–451 (WALM…MTPT), 453–473 (AAAL…RELS), 481–501 (VVEA…ATIF), 526–546 (IAIL…MEAL), 572–592 (IIMV…VNLF), and 609–629 (VLPL…VPAI).

It in the N-terminal section; belongs to the TRAP transporter small permease family. This sequence in the C-terminal section; belongs to the TRAP transporter large permease family. In terms of assembly, the complex comprises the periplasmic solute receptor protein DctP, and the fused transmembrane protein DctMQ.

The protein resides in the cell inner membrane. The protein operates within organosulfur degradation; alkanesulfonate degradation. Part of the tripartite ATP-independent periplasmic (TRAP) transport system DctPQM involved in the uptake of isethionate (2-hydroxyethanesulfonate), which is then catabolized by enzymes encoded by adjacent genes in the locus. Thereby is involved in an anaerobic respiration pathway that converts the sulfonate isethionate to ammonia, acetate and sulfide. The polypeptide is Isethionate TRAP transporter permease protein DctMQ (Oleidesulfovibrio alaskensis (strain ATCC BAA-1058 / DSM 17464 / G20) (Desulfovibrio alaskensis)).